A 160-amino-acid polypeptide reads, in one-letter code: Crossover junction endodeoxyribonuclease RuvC (160 aa).

Residues Asp-7, Glu-67, and Asp-138 contribute to the active site. Mg(2+)-binding residues include Asp-7, Glu-67, and Asp-138.

It belongs to the RuvC family. In terms of assembly, homodimer which binds Holliday junction (HJ) DNA. The HJ becomes 2-fold symmetrical on binding to RuvC with unstacked arms; it has a different conformation from HJ DNA in complex with RuvA. In the full resolvosome a probable DNA-RuvA(4)-RuvB(12)-RuvC(2) complex forms which resolves the HJ. The cofactor is Mg(2+).

Its subcellular location is the cytoplasm. It catalyses the reaction Endonucleolytic cleavage at a junction such as a reciprocal single-stranded crossover between two homologous DNA duplexes (Holliday junction).. Functionally, the RuvA-RuvB-RuvC complex processes Holliday junction (HJ) DNA during genetic recombination and DNA repair. Endonuclease that resolves HJ intermediates. Cleaves cruciform DNA by making single-stranded nicks across the HJ at symmetrical positions within the homologous arms, yielding a 5'-phosphate and a 3'-hydroxyl group; requires a central core of homology in the junction. The consensus cleavage sequence is 5'-(A/T)TT(C/G)-3'. Cleavage occurs on the 3'-side of the TT dinucleotide at the point of strand exchange. HJ branch migration catalyzed by RuvA-RuvB allows RuvC to scan DNA until it finds its consensus sequence, where it cleaves and resolves the cruciform DNA. This chain is Crossover junction endodeoxyribonuclease RuvC, found in Brachyspira hyodysenteriae (strain ATCC 49526 / WA1).